We begin with the raw amino-acid sequence, 327 residues long: Tetraacyldisaccharide 4'-kinase (327 aa).

ATP is bound at residue 52–59; it reads TLGGAGKT.

It belongs to the LpxK family.

The catalysed reaction is a lipid A disaccharide + ATP = a lipid IVA + ADP + H(+). It participates in glycolipid biosynthesis; lipid IV(A) biosynthesis; lipid IV(A) from (3R)-3-hydroxytetradecanoyl-[acyl-carrier-protein] and UDP-N-acetyl-alpha-D-glucosamine: step 6/6. Its function is as follows. Transfers the gamma-phosphate of ATP to the 4'-position of a tetraacyldisaccharide 1-phosphate intermediate (termed DS-1-P) to form tetraacyldisaccharide 1,4'-bis-phosphate (lipid IVA). The chain is Tetraacyldisaccharide 4'-kinase from Methylorubrum extorquens (strain CM4 / NCIMB 13688) (Methylobacterium extorquens).